Reading from the N-terminus, the 129-residue chain is Small ribosomal subunit protein uS11 (129 aa).

Belongs to the universal ribosomal protein uS11 family. As to quaternary structure, part of the 30S ribosomal subunit. Interacts with proteins S7 and S18. Binds to IF-3.

Its function is as follows. Located on the platform of the 30S subunit, it bridges several disparate RNA helices of the 16S rRNA. Forms part of the Shine-Dalgarno cleft in the 70S ribosome. This chain is Small ribosomal subunit protein uS11, found in Symbiobacterium thermophilum (strain DSM 24528 / JCM 14929 / IAM 14863 / T).